The following is a 250-amino-acid chain: DNA repair protein RecO (250 aa).

The protein belongs to the RecO family.

Involved in DNA repair and RecF pathway recombination. This is DNA repair protein RecO from Lactobacillus helveticus (strain DPC 4571).